The sequence spans 606 residues: Thrombospondin-related anonymous protein (606 aa).

Positions M1–G24 are cleaved as a signal peptide. Positions D43–V228 constitute a VWFA domain. Residues V235 to P281 enclose the TSP type-1 domain. Positions P301–G541 are disordered. Low complexity-rich tracts occupy residues E409–P425, E440–S450, and P459–K479. 2 stretches are compositionally biased toward basic and acidic residues: residues N487–D504 and D516–S532. Residues I544 to F564 form a helical membrane-spanning segment.

Interacts (via integrin-like A-domain) with Anopheles gambiae saglin/SG1F; the interaction probably promotes sporozoite invasion of salivary gland. Interacts (via integrin-like A-domain) with human AHSG; the interaction promotes sporozoite invasion of hepatocytes and formation of exoerythrocytic forms of parasites in human hepatoma HepG2 cells.

It is found in the cell membrane. Its subcellular location is the cytoplasm. In terms of biological role, promotes parasite ability to invade host hepatocytes. Promotes parasite ability to invade mosquito salivary glands. Required for sporozoite gliding motility. This is Thrombospondin-related anonymous protein from Plasmodium berghei (strain Anka).